The sequence spans 122 residues: UPF0102 protein Gmet_2864 (122 aa).

The protein belongs to the UPF0102 family.

This chain is UPF0102 protein Gmet_2864, found in Geobacter metallireducens (strain ATCC 53774 / DSM 7210 / GS-15).